We begin with the raw amino-acid sequence, 119 residues long: Large ribosomal subunit protein bL20 (119 aa).

Belongs to the bacterial ribosomal protein bL20 family.

Its function is as follows. Binds directly to 23S ribosomal RNA and is necessary for the in vitro assembly process of the 50S ribosomal subunit. It is not involved in the protein synthesizing functions of that subunit. This Paracoccus denitrificans (strain Pd 1222) protein is Large ribosomal subunit protein bL20.